The following is a 1758-amino-acid chain: Condensin-2 complex subunit hcp-6 (1758 aa).

Disordered regions lie at residues 428–501 (DPGA…KAKE), 969–1008 (ENGS…KGGM), 1379–1460 (QKRL…ARLL), and 1500–1656 (SKQA…LSRG). Positions 438-462 (EQNEEEDEEEEGEDEEEEEENEQDD) are enriched in acidic residues. Over residues 463–473 (VAVKEEEQSDK) the composition is skewed to basic and acidic residues. The segment covering 474–484 (SDEENDGDNEE) has biased composition (acidic residues). A compositionally biased stretch (basic and acidic residues) spans 485-501 (NVSKKKEEKKKEKKAKE). Over residues 969–979 (ENGSSDASTVN) the composition is skewed to polar residues. Residues 999-1008 (SSQKSSKGGM) show a composition bias toward low complexity. Residues 1326 to 1385 (CIEHKNDIDEILQDNRQLKDEMMFELQRVKQRTEEANRILDEYLKRVAEFKKQQKRLSKS) adopt a coiled-coil conformation. Residues 1414 to 1423 (EDQENVEEEV) are compositionally biased toward acidic residues. 2 stretches are compositionally biased toward basic and acidic residues: residues 1424–1437 (EMRT…DADV) and 1500–1512 (SKQA…KTIV). Polar residues-rich tracts occupy residues 1602–1618 (ISAN…QSTE) and 1640–1651 (VPTSSSGNTEND).

Component of the condensin-2 complex.

It is found in the nucleus. The protein resides in the chromosome. The protein localises to the centromere. In terms of biological role, chromosomal protein which is recruited to mitotic chromosomes by hcp-3 (CENP-A) and hcp-4 (CENP-C). Involved in chromosome segregation during mitosis, playing a role in chromosome condensation and in maintaining chromosome morphology, rigidity and orientation during mitosis. This is Condensin-2 complex subunit hcp-6 from Caenorhabditis elegans.